An 820-amino-acid polypeptide reads, in one-letter code: Phenylalanine--tRNA ligase beta subunit (820 aa).

The 113-residue stretch at 42-154 (KGGLEGLVIG…EDAVPGTLAK (113 aa)) folds into the tRNA-binding domain. The region spanning 413–489 (AQDFIVELTY…RIYGYNNVEI (77 aa)) is the B5 domain. Mg(2+)-binding residues include aspartate 467, aspartate 473, glutamate 476, and aspartate 477. The FDX-ACB domain maps to 727-820 (SKFPAVKRDL…LEDKLGAKLR (94 aa)).

It belongs to the phenylalanyl-tRNA synthetase beta subunit family. Type 1 subfamily. In terms of assembly, tetramer of two alpha and two beta subunits. Mg(2+) serves as cofactor.

The protein resides in the cytoplasm. It catalyses the reaction tRNA(Phe) + L-phenylalanine + ATP = L-phenylalanyl-tRNA(Phe) + AMP + diphosphate + H(+). This Bacteroides fragilis (strain YCH46) protein is Phenylalanine--tRNA ligase beta subunit.